We begin with the raw amino-acid sequence, 330 residues long: Glycerol-3-phosphate dehydrogenase [NAD(P)+] (330 aa).

S10, W11, R31, and K105 together coordinate NADPH. Sn-glycerol 3-phosphate contacts are provided by K105, G135, and S137. A139 contributes to the NADPH binding site. Sn-glycerol 3-phosphate is bound by residues K190, D243, S253, R254, and N255. The Proton acceptor role is filled by K190. NADPH is bound at residue R254. The NADPH site is built by V278 and E280.

The protein belongs to the NAD-dependent glycerol-3-phosphate dehydrogenase family.

The protein localises to the cytoplasm. The catalysed reaction is sn-glycerol 3-phosphate + NAD(+) = dihydroxyacetone phosphate + NADH + H(+). The enzyme catalyses sn-glycerol 3-phosphate + NADP(+) = dihydroxyacetone phosphate + NADPH + H(+). Its pathway is membrane lipid metabolism; glycerophospholipid metabolism. Functionally, catalyzes the reduction of the glycolytic intermediate dihydroxyacetone phosphate (DHAP) to sn-glycerol 3-phosphate (G3P), the key precursor for phospholipid synthesis. This is Glycerol-3-phosphate dehydrogenase [NAD(P)+] from Nitratidesulfovibrio vulgaris (strain DP4) (Desulfovibrio vulgaris).